Reading from the N-terminus, the 165-residue chain is MAEIPEGANVTILNRNEKKARELISKLGLKKVPGIIRVTFRKKDNQIFAIEKPEVFRSVGGNYVVFGEAKVDNFTQRLAAAQQQAQSQTATKTPEDIQADMQAAAVANENKTEGDAAEEDVDAGDLSNDDIDLVVQQTNATKGQAIKALKEHNGDIVNAIMSLSK.

In terms of domain architecture, NAC-A/B spans 14 to 78 (NRNEKKAREL…AKVDNFTQRL (65 aa)). One can recognise a UBA domain in the interval 126-165 (LSNDDIDLVVQQTNATKGQAIKALKEHNGDIVNAIMSLSK).

The protein belongs to the NAC-alpha family. Part of the nascent polypeptide-associated complex (NAC), consisting of EGD2 and EGD1. NAC associates with ribosomes via EGD1.

Its subcellular location is the cytoplasm. It is found in the nucleus. Component of the nascent polypeptide-associated complex (NAC), a dynamic component of the ribosomal exit tunnel, protecting the emerging polypeptides from interaction with other cytoplasmic proteins to ensure appropriate nascent protein targeting. The NAC complex also promotes mitochondrial protein import by enhancing productive ribosome interactions with the outer mitochondrial membrane and blocks the inappropriate interaction of ribosomes translating non-secretory nascent polypeptides with translocation sites in the membrane of the endoplasmic reticulum. EGD2 may also be involved in transcription regulation. This Candida glabrata (strain ATCC 2001 / BCRC 20586 / JCM 3761 / NBRC 0622 / NRRL Y-65 / CBS 138) (Yeast) protein is Nascent polypeptide-associated complex subunit alpha (EGD2).